The chain runs to 504 residues: Glycerol kinase (504 aa).

Residue Thr14 participates in ADP binding. Residues Thr14, Thr15, and Ser16 each contribute to the ATP site. A sn-glycerol 3-phosphate-binding site is contributed by Thr14. ADP is bound at residue Arg18. Positions 84, 85, 136, and 246 each coordinate sn-glycerol 3-phosphate. Residues Arg84, Glu85, Tyr136, Asp246, and Gln247 each coordinate glycerol. ADP contacts are provided by Thr268 and Gly311. Positions 268, 311, 315, and 412 each coordinate ATP. 2 residues coordinate ADP: Gly412 and Asn416.

It belongs to the FGGY kinase family.

The catalysed reaction is glycerol + ATP = sn-glycerol 3-phosphate + ADP + H(+). Its pathway is polyol metabolism; glycerol degradation via glycerol kinase pathway; sn-glycerol 3-phosphate from glycerol: step 1/1. Inhibited by fructose 1,6-bisphosphate (FBP). Its function is as follows. Key enzyme in the regulation of glycerol uptake and metabolism. Catalyzes the phosphorylation of glycerol to yield sn-glycerol 3-phosphate. This chain is Glycerol kinase, found in Aliivibrio salmonicida (strain LFI1238) (Vibrio salmonicida (strain LFI1238)).